A 273-amino-acid polypeptide reads, in one-letter code: Protein PERCC1 (273 aa).

Disordered regions lie at residues 18 to 84 (SHES…PETP) and 253 to 273 (GGSE…LAEV). Residues 28 to 56 (EAPEISEEEEEEEEEEEEEEEEEEVDQDQ) are compositionally biased toward acidic residues. Residues 67–83 (DSQSSGVVPQDPSSPET) show a composition bias toward polar residues.

As to expression, specifically expressed in the stomach, pancreas and intestine. In gastrointestinal tissue, expression is primarily restricted to gastric G cells and duodenal enteroendocrine cells (EECs).

Its function is as follows. Plays a critical role in intestinal function by promoting the development of enteroendocrine cells (EECs) of the gastrointestinal tract and pancreas. It is thereby required for normal enteroendocrine peptide hormone secretion. The polypeptide is Protein PERCC1 (Mus musculus (Mouse)).